The chain runs to 336 residues: HTH-type transcriptional repressor PurR (336 aa).

An HTH lacI-type domain is found at 2 to 56 (ATIKDVAKLAGVSTTTVSHVINKTRFVAEDTSKAVWDAIQQLNYSPSAVARSLKV). Residues 4–23 (IKDVAKLAGVSTTTVSHVIN) constitute a DNA-binding region (H-T-H motif). Residues 48–56 (SAVARSLKV) mediate DNA binding. 4 residues coordinate hypoxanthine: Y73, K188, F219, and D273.

In terms of assembly, homodimer.

It functions in the pathway purine metabolism; purine nucleotide biosynthesis [regulation]. Its function is as follows. Is the main repressor of the genes involved in the de novo synthesis of purine nucleotides, regulating purB, purC, purEK, purF, purHD, purL, purMN and guaBA expression. PurR is allosterically activated to bind its cognate DNA by binding the purine corepressors, hypoxanthine or guanine, thereby effecting transcription repression. The protein is HTH-type transcriptional repressor PurR of Actinobacillus pleuropneumoniae serotype 3 (strain JL03).